We begin with the raw amino-acid sequence, 128 residues long: Glycine cleavage system H protein (128 aa).

The Lipoyl-binding domain occupies 24-106 (VATVGITAFA…YNNGWLLKIK (83 aa)). N6-lipoyllysine is present on Lys-65.

The protein belongs to the GcvH family. In terms of assembly, the glycine cleavage system is composed of four proteins: P, T, L and H. (R)-lipoate serves as cofactor.

Its function is as follows. The glycine cleavage system catalyzes the degradation of glycine. The H protein shuttles the methylamine group of glycine from the P protein to the T protein. The chain is Glycine cleavage system H protein from Acaryochloris marina (strain MBIC 11017).